We begin with the raw amino-acid sequence, 701 residues long: DNA ligase (701 aa).

NAD(+) contacts are provided by residues 43 to 47 (DADYD), 92 to 93 (SL), and E126. The N6-AMP-lysine intermediate role is filled by K128. Positions 149, 186, 302, and 326 each coordinate NAD(+). C417, C420, C440, and C446 together coordinate Zn(2+). One can recognise a BRCT domain in the interval 622 to 701 (ETGSPVTGKT…DEWLALIGET (80 aa)).

The protein belongs to the NAD-dependent DNA ligase family. LigA subfamily. Requires Mg(2+) as cofactor. The cofactor is Mn(2+).

It catalyses the reaction NAD(+) + (deoxyribonucleotide)n-3'-hydroxyl + 5'-phospho-(deoxyribonucleotide)m = (deoxyribonucleotide)n+m + AMP + beta-nicotinamide D-nucleotide.. In terms of biological role, DNA ligase that catalyzes the formation of phosphodiester linkages between 5'-phosphoryl and 3'-hydroxyl groups in double-stranded DNA using NAD as a coenzyme and as the energy source for the reaction. It is essential for DNA replication and repair of damaged DNA. The sequence is that of DNA ligase from Hyphomonas neptunium (strain ATCC 15444).